The primary structure comprises 125 residues: Small ribosomal subunit protein uS13 (125 aa).

The interval 97 to 125 (PVRGQKTRSNARTRKGPRPSRIKTKKKSS) is disordered. Positions 101 to 125 (QKTRSNARTRKGPRPSRIKTKKKSS) are enriched in basic residues.

The protein belongs to the universal ribosomal protein uS13 family. Part of the 30S ribosomal subunit. Forms a loose heterodimer with protein S19. Forms two bridges to the 50S subunit in the 70S ribosome.

In terms of biological role, located at the top of the head of the 30S subunit, it contacts several helices of the 16S rRNA. In the 70S ribosome it contacts the 23S rRNA (bridge B1a) and protein L5 of the 50S subunit (bridge B1b), connecting the 2 subunits; these bridges are implicated in subunit movement. Contacts the tRNAs in the A and P-sites. This chain is Small ribosomal subunit protein uS13, found in Thermotoga maritima (strain ATCC 43589 / DSM 3109 / JCM 10099 / NBRC 100826 / MSB8).